A 335-amino-acid polypeptide reads, in one-letter code: Pro-cathepsin H (335 aa).

An N-terminal signal peptide occupies residues 1–22 (MWAVLSLLCAGAWLLGPPACGA). Residues 23 to 97 (SNLAVSSFEK…DEIRHKYLWS (75 aa)) constitute a propeptide that is removed on maturation. Asn72 and Asn101 each carry an N-linked (GlcNAc...) asparagine glycan. Disulfide bonds link Cys102–Cys327, Cys138–Cys181, Cys172–Cys214, and Cys272–Cys322. The propeptide occupies 107-115 (GNYLRGTGP). Residue Cys141 is part of the active site. A glycan (N-linked (GlcNAc...) asparagine) is linked at Asn230. Active-site residues include His281 and Asn301.

It belongs to the peptidase C1 family. In terms of assembly, composed of cathepsin H and mini chain; disulfide-linked. Cathepsin H may be split into heavy and light chain. All chains are held together by disulfide bonds.

It is found in the lysosome. It carries out the reaction Hydrolysis of proteins, acting as an aminopeptidase (notably, cleaving Arg-|-Xaa bonds) as well as an endopeptidase.. Functionally, important for the overall degradation of proteins in lysosomes. In Sus scrofa (Pig), this protein is Pro-cathepsin H (CTSH).